Consider the following 735-residue polypeptide: uncharacterized protein (735 aa).

The region spanning 25–175 (DLSCLSPDLL…CIAAVLAGLL (151 aa)) is the GAF domain. Residues 185–255 (SEAARRAMLD…RQGFMRHLAT (71 aa)) enclose the PAS domain. In terms of domain architecture, PAC spans 263 to 313 (RLVEVEALRADGSVFPAELTVNEHRAGGRRLFSAFVRDISDRITSRRALER). The 123-residue stretch at 342 to 464 (GAVVLMLRDL…DGHLLHFAEH (123 aa)) folds into the GGDEF domain. Residues 472 to 732 (RLELEMALRD…VAGTLPETLA (261 aa)) form the EAL domain.

This is an uncharacterized protein from Azorhizobium caulinodans (strain ATCC 43989 / DSM 5975 / JCM 20966 / LMG 6465 / NBRC 14845 / NCIMB 13405 / ORS 571).